The chain runs to 237 residues: Ditrans,polycis-undecaprenyl-diphosphate synthase ((2E,6E)-farnesyl-diphosphate specific) (237 aa).

Asp11 is an active-site residue. Position 11 (Asp11) interacts with Mg(2+). Residues 12 to 15 (GNGR), Trp16, Arg24, His28, and 56 to 58 (SIE) each bind substrate. Catalysis depends on Asn59, which acts as the Proton acceptor. Substrate contacts are provided by residues Arg62, Arg179, and 185 to 187 (RLS). Glu198 is a Mg(2+) binding site.

Belongs to the UPP synthase family. As to quaternary structure, homodimer. Mg(2+) serves as cofactor.

It carries out the reaction 8 isopentenyl diphosphate + (2E,6E)-farnesyl diphosphate = di-trans,octa-cis-undecaprenyl diphosphate + 8 diphosphate. Catalyzes the sequential condensation of isopentenyl diphosphate (IPP) with (2E,6E)-farnesyl diphosphate (E,E-FPP) to yield (2Z,6Z,10Z,14Z,18Z,22Z,26Z,30Z,34E,38E)-undecaprenyl diphosphate (di-trans,octa-cis-UPP). UPP is the precursor of glycosyl carrier lipid in the biosynthesis of bacterial cell wall polysaccharide components such as peptidoglycan and lipopolysaccharide. The sequence is that of Ditrans,polycis-undecaprenyl-diphosphate synthase ((2E,6E)-farnesyl-diphosphate specific) from Coxiella burnetii (strain RSA 493 / Nine Mile phase I).